Reading from the N-terminus, the 325-residue chain is 4-hydroxy-3-methylbut-2-enyl diphosphate reductase (325 aa).

Residue C13 participates in [4Fe-4S] cluster binding. (2E)-4-hydroxy-3-methylbut-2-enyl diphosphate is bound by residues H42 and H76. Residues H42 and H76 each contribute to the dimethylallyl diphosphate site. Residues H42 and H76 each contribute to the isopentenyl diphosphate site. C98 contributes to the [4Fe-4S] cluster binding site. A (2E)-4-hydroxy-3-methylbut-2-enyl diphosphate-binding site is contributed by H126. Position 126 (H126) interacts with dimethylallyl diphosphate. H126 lines the isopentenyl diphosphate pocket. Residue E128 is the Proton donor of the active site. Residue T169 coordinates (2E)-4-hydroxy-3-methylbut-2-enyl diphosphate. [4Fe-4S] cluster is bound at residue C230. Residues S258, S259, N260, and S306 each contribute to the (2E)-4-hydroxy-3-methylbut-2-enyl diphosphate site. Residues S258, S259, N260, and S306 each coordinate dimethylallyl diphosphate. The isopentenyl diphosphate site is built by S258, S259, N260, and S306.

This sequence belongs to the IspH family. [4Fe-4S] cluster is required as a cofactor.

The catalysed reaction is isopentenyl diphosphate + 2 oxidized [2Fe-2S]-[ferredoxin] + H2O = (2E)-4-hydroxy-3-methylbut-2-enyl diphosphate + 2 reduced [2Fe-2S]-[ferredoxin] + 2 H(+). It carries out the reaction dimethylallyl diphosphate + 2 oxidized [2Fe-2S]-[ferredoxin] + H2O = (2E)-4-hydroxy-3-methylbut-2-enyl diphosphate + 2 reduced [2Fe-2S]-[ferredoxin] + 2 H(+). The protein operates within isoprenoid biosynthesis; dimethylallyl diphosphate biosynthesis; dimethylallyl diphosphate from (2E)-4-hydroxy-3-methylbutenyl diphosphate: step 1/1. Its pathway is isoprenoid biosynthesis; isopentenyl diphosphate biosynthesis via DXP pathway; isopentenyl diphosphate from 1-deoxy-D-xylulose 5-phosphate: step 6/6. Catalyzes the conversion of 1-hydroxy-2-methyl-2-(E)-butenyl 4-diphosphate (HMBPP) into a mixture of isopentenyl diphosphate (IPP) and dimethylallyl diphosphate (DMAPP). Acts in the terminal step of the DOXP/MEP pathway for isoprenoid precursor biosynthesis. This chain is 4-hydroxy-3-methylbut-2-enyl diphosphate reductase, found in Chlorobium phaeobacteroides (strain BS1).